A 347-amino-acid polypeptide reads, in one-letter code: Subtilase cytotoxin subunit A (347 aa).

The signal sequence occupies residues 1–21 (MLKILWTYILFLLFISASARA). The Peptidase S8 domain maps to 24–327 (PWYFDAIGLT…GRVLNAEKAI (304 aa)). Residues D52, H89, and S272 each act as charge relay system in the active site. Residues C288 and C331 are joined by a disulfide bond. The A2 domain stretch occupies residues 322–347 (NAEKAISMFCKKNYIPVRQGRMSEEL). The Prevents secretion from ER motif lies at 344–347 (SEEL).

The protein belongs to the peptidase S8 family. In terms of assembly, forms a complex with SubB with the stoichiometry SubA1:SubB5 (called SubAB5).

The protein localises to the secreted. Its subcellular location is the host cytoplasm. It localises to the host cytosol. The protein resides in the host endoplasmic reticulum lumen. Protease subunit of subtilase cytotoxin SubAB5. An endoprotease specific for host endoplasmic reticulum (ER) chaperone BiP/HSPA5, has no activity on human HSP70 or HSPA8. Cleaves between 'Leu-416' and 'Leu-417' of BiP/HSPA5 in the hinge between BiP's ATPase and protein-binding domains. This induces host ER stress response and eventual cell death. Culture supernatant of E.coli expressing both subA and subB are toxic for Vero cells (African green monkey kidney cell line), Chinese hamster ovary cells and Hct-8 cells (human colonic epithelial cell line); the subunits are not toxic individually. Purified SubAB5 is highly toxic, &lt;0.1 pg is able to kill at least 50% of 30'000 Vero cells in a microtiter plate assay after 3 days; no cytotoxicity is seen at 24 hours. Preabsorption with cells expressing a ganglioside GM2 mimic reduced cytotoxicity of SubAB5 by 93% in the Vero cytotoxicity assay. Intraperitoneal injection of 200 ng of purified SubAB5 kills mice; the higher the dose the faster the mice die. Animals injected intraperitoneally with purified SubAB5 have microvascular thrombi in the brain and other organs, including the renal tubules and glomeruli. Injection induces an unfolded response in mice. Mice fed E.coli cells expressing cloned SubAB5 experience drastic weight loss and appear ill and lethargic. Protein synthesis in Vero cells is transiently inhibited by SubAB5; both subunits are required for this effect. Inhibition of protein synthesis is prevented by brefeldin A; cells are arrested in the G1 phase. SubAB5 at 100 ng/ml induced caspase-dependent apoptosis in Vero cells through mitochondrial membrane damage. This is Subtilase cytotoxin subunit A from Escherichia coli.